Here is a 141-residue protein sequence, read N- to C-terminus: Large ribosomal subunit protein uL11 (141 aa).

It belongs to the universal ribosomal protein uL11 family. Part of the ribosomal stalk of the 50S ribosomal subunit. Interacts with L10 and the large rRNA to form the base of the stalk. L10 forms an elongated spine to which L12 dimers bind in a sequential fashion forming a multimeric L10(L12)X complex. Post-translationally, one or more lysine residues are methylated.

Forms part of the ribosomal stalk which helps the ribosome interact with GTP-bound translation factors. This chain is Large ribosomal subunit protein uL11, found in Parasynechococcus marenigrum (strain WH8102).